We begin with the raw amino-acid sequence, 243 residues long: CTD nuclear envelope phosphatase 1 homolog (243 aa).

Residues 11–27 traverse the membrane as a helical segment; that stretch reads ALLLLLSKVWTCICFMF. Residues 56 to 223 form the FCP1 homology domain; sequence SLVQRKTLVL…LSLLPMLDAL (168 aa).

Belongs to the dullard family.

The protein localises to the membrane. It catalyses the reaction O-phospho-L-seryl-[protein] + H2O = L-seryl-[protein] + phosphate. The enzyme catalyses O-phospho-L-threonyl-[protein] + H2O = L-threonyl-[protein] + phosphate. Functionally, serine/threonine protein phosphatase that may dephosphorylate and activate lipin-like phosphatases. Lipins are phosphatidate phosphatases that catalyze the conversion of phosphatidic acid to diacylglycerol and control the metabolism of fatty acids at different levels. May indirectly modulate the lipid composition of nuclear and/or endoplasmic reticulum membranes and be required for proper nuclear membrane morphology and/or dynamics. May also indirectly regulate the production of lipid droplets and triacylglycerol. This chain is CTD nuclear envelope phosphatase 1 homolog (Dd), found in Drosophila melanogaster (Fruit fly).